Here is a 414-residue protein sequence, read N- to C-terminus: Isocitrate dehydrogenase [NADP] cytoplasmic (414 aa).

The residue at position 2 (S2) is an N-acetylserine. At Y42 the chain carries Phosphotyrosine. 75-77 is a binding site for NADP(+); that stretch reads TIT. T77 provides a ligand contact to substrate. At K81 the chain carries N6-acetyllysine. R82 provides a ligand contact to NADP(+). Substrate is bound by residues 94 to 100 and R109; that span reads SPNGTIR. K126 carries the post-translational modification N6-succinyllysine. Residues R132 and K212 each coordinate substrate. Residues K224 and K233 each carry the N6-acetyllysine modification. Mn(2+) is bound at residue D252. K260 lines the NADP(+) pocket. Residues D275 and D279 each contribute to the Mn(2+) site. 310–315 contacts NADP(+); it reads GTVTRH. K321 is subject to N6-acetyllysine. Position 328 (N328) interacts with NADP(+). At S389 the chain carries Phosphoserine. K400 bears the N6-succinyllysine mark.

The protein belongs to the isocitrate and isopropylmalate dehydrogenases family. In terms of assembly, homodimer. Mg(2+) serves as cofactor. The cofactor is Mn(2+). In terms of processing, acetylation at Lys-374 dramatically reduces catalytic activity. As to expression, expressed preferentially in corneal epithelium. Constitute approximately 13% of the total soluble bovine corneal epithelial proteins.

It is found in the cytoplasm. The protein resides in the cytosol. It catalyses the reaction D-threo-isocitrate + NADP(+) = 2-oxoglutarate + CO2 + NADPH. In terms of biological role, catalyzes the NADP(+)-dependent oxidative decarboxylation of isocitrate (D-threo-isocitrate) to 2-ketoglutarate (2-oxoglutarate), which is required by other enzymes such as the phytanoyl-CoA dioxygenase. Plays a critical role in the generation of NADPH, an important cofactor in many biosynthesis pathways. May act as a corneal epithelial crystallin and may be involved in maintaining corneal epithelial transparency. This Bos taurus (Bovine) protein is Isocitrate dehydrogenase [NADP] cytoplasmic (IDH1).